A 188-amino-acid chain; its full sequence is dCTP deaminase (188 aa).

DCTP-binding positions include 111–116 (KSTYAR), 135–137 (TLE), Q156, Y170, and Q180. E137 serves as the catalytic Proton donor/acceptor.

Belongs to the dCTP deaminase family. Homotrimer.

It carries out the reaction dCTP + H2O + H(+) = dUTP + NH4(+). The protein operates within pyrimidine metabolism; dUMP biosynthesis; dUMP from dCTP (dUTP route): step 1/2. Its function is as follows. Catalyzes the deamination of dCTP to dUTP. This Laribacter hongkongensis (strain HLHK9) protein is dCTP deaminase.